Here is a 438-residue protein sequence, read N- to C-terminus: Acid phosphatase type 7 (438 aa).

The signal sequence occupies residues 1–26 (MHPLPGYWSCYCLLLLFSLGVQGSLG). Fe cation-binding residues include Asp141, Asp170, and Tyr173. Zn(2+) is bound at residue Asp170. Residue Asn205 coordinates Zn(2+). A glycan (N-linked (GlcNAc...) asparagine) is linked at Asn211. Positions 286 and 333 each coordinate Zn(2+). His335 is a binding site for Fe cation. Asn350 and Asn404 each carry an N-linked (GlcNAc...) asparagine glycan.

The protein belongs to the metallophosphoesterase superfamily. Purple acid phosphatase family. It depends on Fe cation as a cofactor. Zn(2+) is required as a cofactor.

It localises to the secreted. The enzyme catalyses a phosphate monoester + H2O = an alcohol + phosphate. This chain is Acid phosphatase type 7, found in Homo sapiens (Human).